Reading from the N-terminus, the 362-residue chain is Alanine racemase (362 aa).

Residue Lys35 is the Proton acceptor; specific for D-alanine of the active site. An N6-(pyridoxal phosphate)lysine modification is found at Lys35. Arg130 provides a ligand contact to substrate. The active-site Proton acceptor; specific for L-alanine is Tyr257. Met305 contacts substrate.

Belongs to the alanine racemase family. Requires pyridoxal 5'-phosphate as cofactor.

The catalysed reaction is L-alanine = D-alanine. The protein operates within amino-acid biosynthesis; D-alanine biosynthesis; D-alanine from L-alanine: step 1/1. Its function is as follows. Catalyzes the interconversion of L-alanine and D-alanine. May also act on other amino acids. This Nitrosomonas europaea (strain ATCC 19718 / CIP 103999 / KCTC 2705 / NBRC 14298) protein is Alanine racemase (alr).